A 797-amino-acid polypeptide reads, in one-letter code: Methionine--tRNA ligase, cytoplasmic (797 aa).

The short motif at 26–36 (PYVNNVPHLGN) is the 'HIGH' region element. Residues 348-352 (KFSKS) carry the 'KMSKS' region motif. Residue lysine 351 coordinates ATP. Positions 601–634 (DQLNKTKLSDAKKQKASSKGGGKPKPQPAADREI) are disordered. The 104-residue stretch at 635-738 (TMARLDIRVG…KTANIGERVT (104 aa)) folds into the tRNA-binding domain.

This sequence belongs to the class-I aminoacyl-tRNA synthetase family.

The protein localises to the cytoplasm. The protein resides in the cytosol. The catalysed reaction is tRNA(Met) + L-methionine + ATP = L-methionyl-tRNA(Met) + AMP + diphosphate. The polypeptide is Methionine--tRNA ligase, cytoplasmic (Arabidopsis thaliana (Mouse-ear cress)).